The primary structure comprises 356 residues: NADH-quinone oxidoreductase subunit H (356 aa).

Transmembrane regions (helical) follow at residues 16-36 (IAVLQILAFAVVLLISLAFLL), 52-72 (PNVVGAFGLLQSFADFFKFVF), 85-105 (LYLLAPLITLILAFVTWAVVP), 117-137 (VGILYLFAMSSLGVYGIIIGG), 163-183 (IGFIIVTVLLFAGSMNLSEII), 201-221 (WPMPMFLVMIPMAVIFFISAL), 254-274 (FMVGEYLNIVLMCAMTAILFF), 295-315 (AWYFFWFAAKIVFFFFMFAMV), and 334-354 (IFLPISLAAVALVGAAVVYGP).

Belongs to the complex I subunit 1 family. As to quaternary structure, NDH-1 is composed of 14 different subunits. Subunits NuoA, H, J, K, L, M, N constitute the membrane sector of the complex.

The protein localises to the cell inner membrane. The catalysed reaction is a quinone + NADH + 5 H(+)(in) = a quinol + NAD(+) + 4 H(+)(out). Functionally, NDH-1 shuttles electrons from NADH, via FMN and iron-sulfur (Fe-S) centers, to quinones in the respiratory chain. The immediate electron acceptor for the enzyme in this species is believed to be ubiquinone. Couples the redox reaction to proton translocation (for every two electrons transferred, four hydrogen ions are translocated across the cytoplasmic membrane), and thus conserves the redox energy in a proton gradient. This subunit may bind ubiquinone. The chain is NADH-quinone oxidoreductase subunit H from Maricaulis maris (strain MCS10) (Caulobacter maris).